A 528-amino-acid chain; its full sequence is Protein spinster homolog 1 (528 aa).

The segment at 1–44 (MSGSDTAPFLSQADDTDDGPAPGTPGLPGSMGNPKSEDPAVPDQ) is disordered. 12 helical membrane passes run 50 to 70 (ITGL…YINL), 98 to 118 (GLIQ…FGYL), 126 to 146 (YLMC…SFIP), 160 to 180 (VGVG…DLFV), 187 to 207 (MLSV…IAGS), 218 to 238 (WALR…FLVV), 278 to 298 (LGFT…PAFL), 323 to 343 (LIFG…GVEI), 357 to 377 (LVCA…LACA), 381 to 401 (IVAT…NWAI), 421 to 441 (FQIV…IGSI), and 465 to 485 (MLCA…AIFI). Phosphoserine is present on serine 518.

Belongs to the major facilitator superfamily. Spinster (TC 2.A.1.49) family. As to quaternary structure, interacts with BCL2 and BCL2L1.

It localises to the lysosome membrane. The enzyme catalyses a 1-acyl-sn-glycero-3-phosphocholine(out) + H(+)(out) = a 1-acyl-sn-glycero-3-phosphocholine(in) + H(+)(in). It carries out the reaction 1-hexadecanoyl-sn-glycero-3-phosphocholine(out) + H(+)(out) = 1-hexadecanoyl-sn-glycero-3-phosphocholine(in) + H(+)(in). It catalyses the reaction 1-(9Z-octadecenoyl)-sn-glycero-3-phosphocholine(out) + H(+)(out) = 1-(9Z-octadecenoyl)-sn-glycero-3-phosphocholine(in) + H(+)(in). The catalysed reaction is 1-(5Z,8Z,11Z,14Z-eicosatetraenoyl)-sn-glycero-3-phosphocholine(out) + H(+)(out) = 1-(5Z,8Z,11Z,14Z-eicosatetraenoyl)-sn-glycero-3-phosphocholine(in) + H(+)(in). The enzyme catalyses 1-(4Z,7Z,10Z,13Z,16Z,19Z-docosahexaenoyl)-sn-glycero-3-phosphocholine(out) + H(+)(out) = 1-(4Z,7Z,10Z,13Z,16Z,19Z-docosahexaenoyl)-sn-glycero-3-phosphocholine(in) + H(+)(in). It carries out the reaction a 1-acyl-sn-glycero-3-phosphoethanolamine(out) + H(+)(out) = a 1-acyl-sn-glycero-3-phosphoethanolamine(in) + H(+)(in). It catalyses the reaction 1-(9Z-octadecenoyl)-sn-glycero-3-phosphoethanolamine(out) + H(+)(out) = 1-(9Z-octadecenoyl)-sn-glycero-3-phosphoethanolamine(in) + H(+)(in). The catalysed reaction is 1-acyl-sn-glycero-3-phospho-(1'-sn-glycerol)(out) + H(+)(out) = 1-acyl-sn-glycero-3-phospho-(1'-sn-glycerol)(in) + H(+)(in). The enzyme catalyses 1-(9Z-octadecenoyl)-sn-glycero-3-phospho-(1'-sn-glycerol)(out) + H(+)(out) = 1-(9Z-octadecenoyl)-sn-glycero-3-phospho-(1'-sn-glycerol)(in) + H(+)(in). It carries out the reaction a 1-O-(1Z-alkenyl)-sn-glycero-3-phosphocholine(out) + H(+)(out) = a 1-O-(1Z-alkenyl)-sn-glycero-3-phosphocholine(in) + H(+)(in). It catalyses the reaction 1-(1Z-hexadecenyl)-sn-glycero-3-phosphocholine(out) + H(+)(out) = 1-(1Z-hexadecenyl)-sn-glycero-3-phosphocholine(in) + H(+)(in). The catalysed reaction is a 1-O-(1Z-alkenyl)-sn-glycero-3-phosphoethanolamine(out) + H(+)(out) = a 1-O-(1Z-alkenyl)-sn-glycero-3-phosphoethanolamine(in) + H(+)(in). The enzyme catalyses 1-O-(1Z-hexadecenyl)-sn-glycero-3-phosphoethanolamine(out) + H(+)(out) = 1-O-(1Z-hexadecenyl)-sn-glycero-3-phosphoethanolamine(in) + H(+)(in). Functionally, plays a critical role in the phospholipid salvage pathway from lysosomes to the cytosol. Mediates the rate-limiting, proton-dependent, lysosomal efflux of lysophospholipids, which can then be reacylated by acyltransferases in the endoplasmic reticulum to form phospholipids. Selective for zwitterionic headgroups such as lysophosphatidylcholine (LPC) and lysophosphatidylethanolamine (LPE), can also transport lysophosphatidylglycerol (LPG), but not other anionic lysophospholipids, sphingosine, nor sphingomyelin. Transports lysophospholipids with saturated, monounsaturated, and polyunsaturated fatty acids, such as 1-hexadecanoyl-sn-glycero-3-phosphocholine, 1-(9Z-octadecenoyl)-sn-glycero-3-phosphocholine and 1-(4Z,7Z,10Z,13Z,16Z,19Z-docosahexaenoyl)-sn-glycero-3-phosphocholine, respectively. Can also transport lysoplasmalogen (LPC with a fatty alcohol) such as 1-(1Z-hexadecenyl)-sn-glycero-3-phosphocholine. Essential player in lysosomal homeostasis. Crucial for cell survival under conditions of nutrient limitation. May be involved in necrotic or autophagic cell death. This chain is Protein spinster homolog 1 (SPNS1), found in Bos taurus (Bovine).